A 286-amino-acid chain; its full sequence is Putative ribosome-inactivating protein (286 aa).

A signal peptide spans 1–21; it reads MNRFSVLMCLVILSIFHGVPT. 2 N-linked (GlcNAc...) asparagine glycosylation sites follow: N103 and N110. E185 is an active-site residue. N252 carries an N-linked (GlcNAc...) asparagine glycan.

It belongs to the ribosome-inactivating protein family. Type 1 RIP subfamily.

The catalysed reaction is Endohydrolysis of the N-glycosidic bond at one specific adenosine on the 28S rRNA.. This is Putative ribosome-inactivating protein from Cucumis ficifolius (Cucumis figarei).